The chain runs to 1080 residues: Myocardin-related transcription factor B (1080 aa).

One copy of the RPEL 1 repeat lies at E40–K65. Residue S66 is modified to Phosphoserine. RPEL repeat units follow at residues N84 to F109 and D128 to S153. 4 disordered regions span residues T170–T222, T234–M311, P352–D384, and P477–D501. Polar residues-rich tracts occupy residues Q188–S200 and Q240–K259. The span at N272 to P287 shows a compositional bias: basic and acidic residues. Residues N358–S370 are compositionally biased toward low complexity. In terms of domain architecture, SAP spans L383–Q417. 3 positions are modified to phosphoserine: S531, S535, and S537. A coiled-coil region spans residues S539 to R594. The required for interaction with itself and with MRTFA stretch occupies residues L557 to L585. Disordered stretches follow at residues E588–Q646 and L794–F846. Over residues P595 to P606 the composition is skewed to pro residues. K622 is covalently cross-linked (Glycyl lysine isopeptide (Lys-Gly) (interchain with G-Cter in SUMO1)). Over residues L794 to T821 the composition is skewed to polar residues. S913 is subject to Phosphoserine. Positions G969 to E988 are disordered. Residues P972 to S983 are compositionally biased toward polar residues.

Interacts with MRTFA and SRF. Post-translationally, O-glycosylated. Widely expressed. High expression in heart, brain and testis. Lower expression in lung, liver and kidney.

The protein resides in the nucleus. Functionally, acts as a transcriptional coactivator of serum response factor (SRF). Required for skeletal myogenic differentiation. This Mus musculus (Mouse) protein is Myocardin-related transcription factor B (Mrtfb).